Reading from the N-terminus, the 359-residue chain is MDFDKQLFFNVEKIVELTEQLEKDLNKPNLSFEQIKVINKELKHKQPLIVKFKELQKLVENANEAEQILNNSSLKELHEEAKKELEKIKASLPSLEEEIKFLLLPVDENNQKNVIVEIRPAAGGDESCIFLSDLFNMYKNYCTSKNWTVELNEIIPASVGINFVSFAVNGTDVFAKLKFESGVHRVQRVPLTEAKGRVHTSTVTVAVLPQLEEVEITINPSDLRIDTYRASGAGGQHVNRTESAVRITHLPTGIVVACQEGKSQFSNRDKAMKMLRAKLWENAQNKQLSTQADLRKSQVGSGERAEKIRTYNYPQNRITDHRIKLTINKLNTVILGDLDEIIEALQADEKKQQLEKFIS.

Glutamine 236 bears the N5-methylglutamine mark.

Belongs to the prokaryotic/mitochondrial release factor family. In terms of processing, methylated by PrmC. Methylation increases the termination efficiency of RF1.

It is found in the cytoplasm. Its function is as follows. Peptide chain release factor 1 directs the termination of translation in response to the peptide chain termination codons UAG and UAA. This is Peptide chain release factor 1 (prfA) from Mycoplasma genitalium (strain ATCC 33530 / DSM 19775 / NCTC 10195 / G37) (Mycoplasmoides genitalium).